Consider the following 415-residue polypeptide: Ammonium transporter Rh type A (415 aa).

At 1–2 (MR) the chain is on the cytoplasmic side. Residues 3 to 23 (FIFPTIAVLLEASMIVLFGFF) form a helical membrane-spanning segment. The Extracellular segment spans residues 24 to 51 (VKYETEQNAIQQPNSTNSTKVDRSLELY). Residues asparagine 37 and asparagine 40 are each glycosylated (N-linked (GlcNAc...) asparagine). The chain crosses the membrane as a helical span at residues 52 to 72 (PLFQDVHVMIFVGFGFLMTFL). Over 73–76 (KKYG) the chain is Cytoplasmic. A helical membrane pass occupies residues 77-97 (FSSVGINLLIAALGLQWGTFV). At 98–115 (QGMVHRHGQTIYIGIKNM) the chain is on the extracellular side. A helical transmembrane segment spans residues 116 to 136 (INADFSTATVLISFGAVLGKI). Residues 137–142 (SPTQML) are Cytoplasmic-facing. Residues 143–163 (IMTIIEITVFAGNEYVVGEIF) form a helical membrane-spanning segment. Residues 164–167 (QASD) lie on the Extracellular side of the membrane. A helical transmembrane segment spans residues 168-188 (IGASMTIHAFGAYFGLAVAGV). Topologically, residues 189–208 (LYRTGLRKGHEKEESEYHSD) are cytoplasmic. Residues 209 to 229 (LFAMIGTLFLWMFWPSFNSAI) traverse the membrane as a helical segment. The Extracellular portion of the chain corresponds to 230–236 (AETAEEQ). The helical transmembrane segment at 237–257 (YLAIINTYLSLVACVLTAYAM) threads the bilayer. At 258 to 268 (SSLVGHRGKLD) the chain is on the cytoplasmic side. Residues 269–287 (MVHIQNATLAGGVAVGTCA) form a helical membrane-spanning segment. Residues 288-290 (DMK) lie on the Extracellular side of the membrane. The chain crosses the membrane as a helical span at residues 291–311 (IHPYGSLIIGSIAGMVSVLGF). Over 312–332 (RFLTPCLTAKLRIHDTCGVHN) the chain is Cytoplasmic. Residues 333–353 (LHGLPGVVGGLSSIVAILLGV) traverse the membrane as a helical segment. Residues 354-363 (STASSMTMQA) lie on the Extracellular side of the membrane. A helical transmembrane segment spans residues 364-384 (AALGSSIGSAIAGGLITGLIL). The Cytoplasmic segment spans residues 385–415 (RFIVRGQPSKDNFFDDSVYWEVPKEKELDNV).

The protein belongs to the ammonium transporter (TC 2.A.49) family. Rh subfamily. As to quaternary structure, homodimer. Heterotrimer; a RHCE monomer interacts with a RHAG homodimer. Component of the ankyrin-1 complex in the erythrocyte, composed of ANK1, RHCE, RHAG, SLC4A1, EPB42, GYPA, GYPB and AQP1. Interacts with GYPB (via the N-terminal); this interaction bridges the (RHAG)2(RHCE) heterotrimer with the SLC4A1 Band 3 I dimer complexed with GYPA. Glycosylated.

The protein resides in the membrane. The catalysed reaction is methylamine(out) = methylamine(in). The enzyme catalyses NH4(+)(in) = NH4(+)(out). It carries out the reaction CO2(out) = CO2(in). Its function is as follows. Component of the ankyrin-1 complex, a multiprotein complex involved in the stability and shape of the erythrocyte membrane. Heterotrimer with RHCE (RHAG)2(RHCE), that transports ammonium and its related derivative methylammonium, in both neutral and ionic forms, across the erythrocyte membrane. The transport of NH4(+) is electrogenic and masks the NH3 transport. Also, may act as a CO2 channel. Moreover in erythrocyte, regulates RHD membrane expression and is associated with rhesus blood group antigen expression. The polypeptide is Ammonium transporter Rh type A (Canis lupus familiaris (Dog)).